The following is a 1153-amino-acid chain: Probable RNA-dependent RNA polymerase 3 (1153 aa).

Belongs to the RdRP family. As to expression, expressed in shoot apical meristem (SAM) and panicles.

The enzyme catalyses RNA(n) + a ribonucleoside 5'-triphosphate = RNA(n+1) + diphosphate. Probably involved in the RNA silencing pathway and required for the generation of small interfering RNAs (siRNAs). The polypeptide is Probable RNA-dependent RNA polymerase 3 (RDR3) (Oryza sativa subsp. japonica (Rice)).